A 450-amino-acid polypeptide reads, in one-letter code: Deoxyguanosinetriphosphate triphosphohydrolase-like protein (450 aa).

Residues 61 to 201 (RLTHSLEVAQ…AKLAPELNAD (141 aa)) enclose the HD domain.

The protein belongs to the dGTPase family. Type 2 subfamily.

The protein is Deoxyguanosinetriphosphate triphosphohydrolase-like protein of Pasteurella multocida (strain Pm70).